A 215-amino-acid polypeptide reads, in one-letter code: Large ribosomal subunit protein uL4 (215 aa).

The tract at residues 43–97 is disordered; that stretch reads RRQGTHSTKTRAEVSGGGKKPWRQKGTGRARAGSTRSPIWVGGGKTHTPKPRDYS.

It belongs to the universal ribosomal protein uL4 family. Part of the 50S ribosomal subunit.

One of the primary rRNA binding proteins, this protein initially binds near the 5'-end of the 23S rRNA. It is important during the early stages of 50S assembly. It makes multiple contacts with different domains of the 23S rRNA in the assembled 50S subunit and ribosome. Functionally, forms part of the polypeptide exit tunnel. The sequence is that of Large ribosomal subunit protein uL4 from Brachyspira pilosicoli (Serpulina pilosicoli).